Reading from the N-terminus, the 497-residue chain is MSTGPDVKATVGDISSDGNLNVAQEECSRKGFCSVRHGLALILQLCNFSIYTQQMNLSIAIPAMVNNTAPPSQPNASTERPSTDSQGYWNETLKEFKAMAPAYDWSPEIQGIILSSLNYGSFLAPIPSGYVAGIFGAKYVVGAGLFISSFLTLFIPLAANAGVALLIVLRIVQGIAQVMVLTGQYSIWVKWAPPLERSQLTTIAGSGSMLGSFIVLLAGGLLCQTIGWPYVFYIFGGIGCACCPLWFPLIYDDPVNHPFISAGEKRYIVCSLAQQDCSPGWSLPIRAMIKSLPLWAILVSYFCEYWLFYTIMAYTPTYISSVLQANLRDSGILSALPFVVGCICIILGGLLADFLLSRKILRLITIRKLFTAIGVLFPSVILVSLPWVRSSHSMTMTFLVLSSAISSFCESGALVNFLDIAPRYTGFLKGLLQVFAHIAGAISPTAAGFFISQDSEFGWRNVFLLSAAVNISGLVFYLIFGRADVQDWAKEQTFTHL.

5 N-linked (GlcNAc...) asparagine glycosylation sites follow: Asn47, Asn56, Asn66, Asn75, and Asn90. Transmembrane regions (helical) follow at residues 149–169 (SFLTLFIPLAANAGVALLIVL), 171–191 (IVQGIAQVMVLTGQYSIWVKW), 203–223 (IAGSGSMLGSFIVLLAGGLLC), 230–250 (YVFYIFGGIGCACCPLWFPLI), 292–312 (LPLWAILVSYFCEYWLFYTIM), 332–352 (ILSALPFVVGCICIILGGLLA), 368–388 (KLFTAIGVLFPSVILVSLPWV), 398–418 (FLVLSSAISSFCESGALVNFL), 431–451 (LLQVFAHIAGAISPTAAGFFI), and 461–481 (NVFLLSAAVNISGLVFYLIFG).

The protein belongs to the major facilitator superfamily. Sodium/anion cotransporter family. In terms of tissue distribution, abundantly expressed in pancreas, liver, colon and small intestine, less in kidney. Not detected in the adrenal glands, brain, placenta, heart, testis, skeletal muscle, and lungs.

The protein localises to the apical cell membrane. It catalyses the reaction 3 Na(+)(out) + phosphate(out) = 3 Na(+)(in) + phosphate(in). It carries out the reaction urate(out) + n chloride(in) = urate(in) + n chloride(out). The enzyme catalyses L-thyroxine(out) = L-thyroxine(in). The catalysed reaction is 3,3',5-triiodo-L-thyronine(out) = 3,3',5-triiodo-L-thyronine(in). Functionally, acts as a membrane potential-dependent organic anion transporter, the transport requires a low concentration of chloride ions. Mediates chloride-dependent transport of urate. Mediates sodium-independent high affinity transport of thyroid hormones including L-thyroxine (T4) and 3,3',5-triiodo-L-thyronine (T3). Can actively transport inorganic phosphate into cells via Na(+) cotransport. The polypeptide is Probable small intestine urate exporter (SLC17A4) (Homo sapiens (Human)).